The chain runs to 280 residues: Eukaryotic translation initiation factor 3 subunit F-1 (280 aa).

One can recognise an MPN domain in the interval 8-138; it reads VRVHPVVLFQ…LRSYVCIQLG (131 aa).

It belongs to the eIF-3 subunit F family. In terms of assembly, component of the eukaryotic translation initiation factor 3 (eIF-3) complex. The eIF-3 complex interacts with pix.

Its subcellular location is the cytoplasm. In terms of biological role, component of the eukaryotic translation initiation factor 3 (eIF-3) complex, which is involved in protein synthesis of a specialized repertoire of mRNAs and, together with other initiation factors, stimulates binding of mRNA and methionyl-tRNAi to the 40S ribosome. The eIF-3 complex specifically targets and initiates translation of a subset of mRNAs involved in cell proliferation. The polypeptide is Eukaryotic translation initiation factor 3 subunit F-1 (Drosophila persimilis (Fruit fly)).